We begin with the raw amino-acid sequence, 465 residues long: ATP synthase subunit beta (465 aa).

154 to 161 (GGAGVGKT) is a binding site for ATP.

This sequence belongs to the ATPase alpha/beta chains family. F-type ATPases have 2 components, CF(1) - the catalytic core - and CF(0) - the membrane proton channel. CF(1) has five subunits: alpha(3), beta(3), gamma(1), delta(1), epsilon(1). CF(0) has three main subunits: a(1), b(2) and c(9-12). The alpha and beta chains form an alternating ring which encloses part of the gamma chain. CF(1) is attached to CF(0) by a central stalk formed by the gamma and epsilon chains, while a peripheral stalk is formed by the delta and b chains.

It localises to the cell inner membrane. The enzyme catalyses ATP + H2O + 4 H(+)(in) = ADP + phosphate + 5 H(+)(out). Produces ATP from ADP in the presence of a proton gradient across the membrane. The catalytic sites are hosted primarily by the beta subunits. The polypeptide is ATP synthase subunit beta (Methylobacillus flagellatus (strain ATCC 51484 / DSM 6875 / VKM B-1610 / KT)).